We begin with the raw amino-acid sequence, 659 residues long: RNA-binding protein MIP6 (659 aa).

The segment covering 1-27 has biased composition (polar residues); sequence MPNSHGNVLNNISLNSKQNPRSISKSC. Positions 1–35 are disordered; sequence MPNSHGNVLNNISLNSKQNPRSISKSCPNDKDARQ. 3 consecutive RRM domains span residues 111-189, 199-267, and 313-389; these read NSLF…PSMK, TNVF…GNKI, and KTIL…PGKD.

Interacts with MEX67.

The protein localises to the cytoplasm. In Saccharomyces cerevisiae (strain ATCC 204508 / S288c) (Baker's yeast), this protein is RNA-binding protein MIP6 (MIP6).